Consider the following 350-residue polypeptide: Dihydroorotase (350 aa).

2 residues coordinate Zn(2+): His-17 and His-19. Substrate contacts are provided by residues 19–21 and Asn-45; that span reads HLR. 3 residues coordinate Zn(2+): Lys-103, His-140, and His-178. Residue Lys-103 is modified to N6-carboxylysine. Substrate is bound at residue His-140. Substrate is bound at residue Leu-223. Asp-251 is a Zn(2+) binding site. Asp-251 is an active-site residue. Substrate-binding residues include His-255 and Ala-267.

This sequence belongs to the metallo-dependent hydrolases superfamily. DHOase family. Class II DHOase subfamily. In terms of assembly, homodimer. Zn(2+) is required as a cofactor.

The catalysed reaction is (S)-dihydroorotate + H2O = N-carbamoyl-L-aspartate + H(+). It functions in the pathway pyrimidine metabolism; UMP biosynthesis via de novo pathway; (S)-dihydroorotate from bicarbonate: step 3/3. Its function is as follows. Catalyzes the reversible cyclization of carbamoyl aspartate to dihydroorotate. This Erwinia tasmaniensis (strain DSM 17950 / CFBP 7177 / CIP 109463 / NCPPB 4357 / Et1/99) protein is Dihydroorotase.